Here is a 448-residue protein sequence, read N- to C-terminus: Methylenetetrahydrofolate--tRNA-(uracil-5-)-methyltransferase TrmFO (448 aa).

13 to 18 (GAGLAG) serves as a coordination point for FAD.

This sequence belongs to the MnmG family. TrmFO subfamily. It depends on FAD as a cofactor.

Its subcellular location is the cytoplasm. It catalyses the reaction uridine(54) in tRNA + (6R)-5,10-methylene-5,6,7,8-tetrahydrofolate + NADH + H(+) = 5-methyluridine(54) in tRNA + (6S)-5,6,7,8-tetrahydrofolate + NAD(+). It carries out the reaction uridine(54) in tRNA + (6R)-5,10-methylene-5,6,7,8-tetrahydrofolate + NADPH + H(+) = 5-methyluridine(54) in tRNA + (6S)-5,6,7,8-tetrahydrofolate + NADP(+). Catalyzes the folate-dependent formation of 5-methyl-uridine at position 54 (M-5-U54) in all tRNAs. The polypeptide is Methylenetetrahydrofolate--tRNA-(uracil-5-)-methyltransferase TrmFO (Streptococcus pyogenes serotype M5 (strain Manfredo)).